The sequence spans 217 residues: 3,4-dihydroxy-2-butanone 4-phosphate synthase (217 aa).

Residues 37 to 38, aspartate 42, 150 to 154, and glutamate 174 contribute to the D-ribulose 5-phosphate site; these read RE and RGGHT. Glutamate 38 provides a ligand contact to Mg(2+). Histidine 153 contacts Mg(2+).

It belongs to the DHBP synthase family. In terms of assembly, homodimer. Requires Mg(2+) as cofactor. It depends on Mn(2+) as a cofactor.

The catalysed reaction is D-ribulose 5-phosphate = (2S)-2-hydroxy-3-oxobutyl phosphate + formate + H(+). It participates in cofactor biosynthesis; riboflavin biosynthesis; 2-hydroxy-3-oxobutyl phosphate from D-ribulose 5-phosphate: step 1/1. Functionally, catalyzes the conversion of D-ribulose 5-phosphate to formate and 3,4-dihydroxy-2-butanone 4-phosphate. The chain is 3,4-dihydroxy-2-butanone 4-phosphate synthase from Sodalis glossinidius (strain morsitans).